A 96-amino-acid polypeptide reads, in one-letter code: MSAVLSTENGLILKLYIQPKASRDQIVGLHGDELKVAITAPPVDGQANAHLVKFIAKQFRVAKSQVIIEKGELGRHKQIKVINPQQIPPEVTILLE.

Belongs to the UPF0235 family.

This Yersinia pseudotuberculosis serotype O:3 (strain YPIII) protein is UPF0235 protein YPK_0828.